Reading from the N-terminus, the 344-residue chain is Arginine N-succinyltransferase (344 aa).

Leucine 125 contacts succinyl-CoA. The active-site Proton donor is histidine 229.

Belongs to the arginine N-succinyltransferase family.

It carries out the reaction succinyl-CoA + L-arginine = N(2)-succinyl-L-arginine + CoA + H(+). It participates in amino-acid degradation; L-arginine degradation via AST pathway; L-glutamate and succinate from L-arginine: step 1/5. Catalyzes the transfer of succinyl-CoA to arginine to produce N(2)-succinylarginine. This is Arginine N-succinyltransferase from Escherichia coli (strain UTI89 / UPEC).